A 105-amino-acid chain; its full sequence is Small ribosomal subunit protein uS10 (105 aa).

Belongs to the universal ribosomal protein uS10 family. In terms of assembly, part of the 30S ribosomal subunit.

Involved in the binding of tRNA to the ribosomes. This is Small ribosomal subunit protein uS10 from Chlamydia muridarum (strain MoPn / Nigg).